The primary structure comprises 658 residues: UvrABC system protein B (658 aa).

A Helicase ATP-binding domain is found at 25–182; sequence DSIRSGNKFN…LKLVDMGYKR (158 aa). ATP is bound at residue 38-45; it reads GVTGSGKT. The short motif at 91–114 is the Beta-hairpin element; sequence YYDYYQPEAYIPRQDLFIEKDSSI. The Helicase C-terminal domain maps to 433–596; that stretch reads QVEVLFDRAK…TPRSASRNLE (164 aa). Residues 623 to 658 enclose the UVR domain; sequence AKIVKELRKQMLEAAKNLEFEKAAALRDEIAKLREL.

The protein belongs to the UvrB family. As to quaternary structure, forms a heterotetramer with UvrA during the search for lesions. Interacts with UvrC in an incision complex.

It is found in the cytoplasm. In terms of biological role, the UvrABC repair system catalyzes the recognition and processing of DNA lesions. A damage recognition complex composed of 2 UvrA and 2 UvrB subunits scans DNA for abnormalities. Upon binding of the UvrA(2)B(2) complex to a putative damaged site, the DNA wraps around one UvrB monomer. DNA wrap is dependent on ATP binding by UvrB and probably causes local melting of the DNA helix, facilitating insertion of UvrB beta-hairpin between the DNA strands. Then UvrB probes one DNA strand for the presence of a lesion. If a lesion is found the UvrA subunits dissociate and the UvrB-DNA preincision complex is formed. This complex is subsequently bound by UvrC and the second UvrB is released. If no lesion is found, the DNA wraps around the other UvrB subunit that will check the other stand for damage. The chain is UvrABC system protein B from Campylobacter fetus subsp. fetus (strain 82-40).